We begin with the raw amino-acid sequence, 306 residues long: Aspartate carbamoyltransferase catalytic subunit (306 aa).

R51 and T52 together coordinate carbamoyl phosphate. An L-aspartate-binding site is contributed by K79. Carbamoyl phosphate is bound by residues R101, H130, and Q133. L-aspartate-binding residues include R163 and R215. Residues G256 and P257 each coordinate carbamoyl phosphate.

This sequence belongs to the aspartate/ornithine carbamoyltransferase superfamily. ATCase family. Heterododecamer (2C3:3R2) of six catalytic PyrB chains organized as two trimers (C3), and six regulatory PyrI chains organized as three dimers (R2).

The catalysed reaction is carbamoyl phosphate + L-aspartate = N-carbamoyl-L-aspartate + phosphate + H(+). It functions in the pathway pyrimidine metabolism; UMP biosynthesis via de novo pathway; (S)-dihydroorotate from bicarbonate: step 2/3. Its function is as follows. Catalyzes the condensation of carbamoyl phosphate and aspartate to form carbamoyl aspartate and inorganic phosphate, the committed step in the de novo pyrimidine nucleotide biosynthesis pathway. The protein is Aspartate carbamoyltransferase catalytic subunit of Ehrlichia ruminantium (strain Welgevonden).